A 616-amino-acid polypeptide reads, in one-letter code: Sulfite reductase [NADPH] flavoprotein alpha-component (616 aa).

Residues 80–218 (LTIIFASQTG…SAAQWRKQAL (139 aa)) form the Flavodoxin-like domain. FMN-binding positions include 86-91 (SQTGNA), 133-136 (STNG), and 169-178 (LGDSSYEFFC). One can recognise an FAD-binding FR-type domain in the interval 251–465 (QKPYAATLLT…VENNNNFKLP (215 aa)). Residues Thr339, Gly373, 403–406 (RLYS), 421–423 (TVG), Tyr427, and 436–439 (GGAS) each bind FAD. Residues 536-537 (SR), 542-546 (KVYVQ), and Asp578 contribute to the NADP(+) site. Tyr616 serves as a coordination point for FAD.

The protein belongs to the NADPH-dependent sulphite reductase flavoprotein subunit CysJ family. In the N-terminal section; belongs to the flavodoxin family. This sequence in the C-terminal section; belongs to the flavoprotein pyridine nucleotide cytochrome reductase family. Alpha(8)-beta(8). The alpha component is a flavoprotein, the beta component is a hemoprotein. It depends on FAD as a cofactor. FMN is required as a cofactor.

The enzyme catalyses hydrogen sulfide + 3 NADP(+) + 3 H2O = sulfite + 3 NADPH + 4 H(+). Its pathway is sulfur metabolism; hydrogen sulfide biosynthesis; hydrogen sulfide from sulfite (NADPH route): step 1/1. Functionally, component of the sulfite reductase complex that catalyzes the 6-electron reduction of sulfite to sulfide. This is one of several activities required for the biosynthesis of L-cysteine from sulfate. The flavoprotein component catalyzes the electron flow from NADPH -&gt; FAD -&gt; FMN to the hemoprotein component. The polypeptide is Sulfite reductase [NADPH] flavoprotein alpha-component (Vibrio vulnificus (strain CMCP6)).